Reading from the N-terminus, the 437-residue chain is Enolase (437 aa).

Glutamine 166 contacts (2R)-2-phosphoglycerate. Glutamate 208 acts as the Proton donor in catalysis. Residues aspartate 245, glutamate 295, and aspartate 322 each contribute to the Mg(2+) site. Positions 347, 376, 377, and 398 each coordinate (2R)-2-phosphoglycerate. The active-site Proton acceptor is lysine 347.

Belongs to the enolase family. Requires Mg(2+) as cofactor.

The protein localises to the cytoplasm. It localises to the secreted. It is found in the cell surface. It carries out the reaction (2R)-2-phosphoglycerate = phosphoenolpyruvate + H2O. The protein operates within carbohydrate degradation; glycolysis; pyruvate from D-glyceraldehyde 3-phosphate: step 4/5. In terms of biological role, catalyzes the reversible conversion of 2-phosphoglycerate (2-PG) into phosphoenolpyruvate (PEP). It is essential for the degradation of carbohydrates via glycolysis. The chain is Enolase from Lachnoclostridium phytofermentans (strain ATCC 700394 / DSM 18823 / ISDg) (Clostridium phytofermentans).